Consider the following 308-residue polypeptide: Aspartate carbamoyltransferase catalytic subunit (308 aa).

2 residues coordinate carbamoyl phosphate: R57 and T58. L-aspartate is bound at residue K86. The carbamoyl phosphate site is built by R107, H135, and Q138. Residues R168 and R229 each coordinate L-aspartate. Positions 268 and 269 each coordinate carbamoyl phosphate.

Belongs to the aspartate/ornithine carbamoyltransferase superfamily. ATCase family. Heterooligomer of catalytic and regulatory chains.

It carries out the reaction carbamoyl phosphate + L-aspartate = N-carbamoyl-L-aspartate + phosphate + H(+). Its pathway is pyrimidine metabolism; UMP biosynthesis via de novo pathway; (S)-dihydroorotate from bicarbonate: step 2/3. Functionally, catalyzes the condensation of carbamoyl phosphate and aspartate to form carbamoyl aspartate and inorganic phosphate, the committed step in the de novo pyrimidine nucleotide biosynthesis pathway. This is Aspartate carbamoyltransferase catalytic subunit from Pyrococcus furiosus (strain ATCC 43587 / DSM 3638 / JCM 8422 / Vc1).